The primary structure comprises 333 residues: 6-phosphogluconolactonase (333 aa).

The protein belongs to the cycloisomerase 2 family.

It carries out the reaction 6-phospho-D-glucono-1,5-lactone + H2O = 6-phospho-D-gluconate + H(+). Its pathway is carbohydrate degradation; pentose phosphate pathway; D-ribulose 5-phosphate from D-glucose 6-phosphate (oxidative stage): step 2/3. Its function is as follows. Catalyzes the hydrolysis of 6-phosphogluconolactone to 6-phosphogluconate. This chain is 6-phosphogluconolactonase, found in Cronobacter sakazakii (strain ATCC BAA-894) (Enterobacter sakazakii).